A 647-amino-acid chain; its full sequence is DNA mismatch repair protein MutL (647 aa).

The disordered stretch occupies residues 375 to 433; sequence KQEEPQAVKQPTQLWQPPKQEWQPPQSLVREEQSWQPSTKPIIEEPIQEEKSWDSNEEG. Over residues 387 to 400 the composition is skewed to low complexity; that stretch reads QLWQPPKQEWQPPQ.

The protein belongs to the DNA mismatch repair MutL/HexB family.

This protein is involved in the repair of mismatches in DNA. It is required for dam-dependent methyl-directed DNA mismatch repair. May act as a 'molecular matchmaker', a protein that promotes the formation of a stable complex between two or more DNA-binding proteins in an ATP-dependent manner without itself being part of a final effector complex. The chain is DNA mismatch repair protein MutL from Bacillus cereus (strain AH820).